The primary structure comprises 235 residues: Sugar fermentation stimulation protein homolog (235 aa).

It belongs to the SfsA family.

The polypeptide is Sugar fermentation stimulation protein homolog (Pseudomonas aeruginosa (strain LESB58)).